We begin with the raw amino-acid sequence, 355 residues long: Phospho-N-acetylmuramoyl-pentapeptide-transferase (355 aa).

10 consecutive transmembrane segments (helical) span residues 3–23, 56–76, 80–100, 120–140, 152–172, 185–205, 224–244, 251–271, 276–296, and 330–350; these read GVLI…PWVI, VIIV…GIGF, GLLV…DDYI, AAVA…AGLL, TSLT…IAAT, LAAG…FWQF, PLDV…FLWW, IFMG…IAIV, LLLV…MIQV, and FWIV…AEFL.

Belongs to the glycosyltransferase 4 family. MraY subfamily. Requires Mg(2+) as cofactor.

It is found in the cell membrane. The enzyme catalyses UDP-N-acetyl-alpha-D-muramoyl-L-alanyl-gamma-D-glutamyl-meso-2,6-diaminopimeloyl-D-alanyl-D-alanine + di-trans,octa-cis-undecaprenyl phosphate = di-trans,octa-cis-undecaprenyl diphospho-N-acetyl-alpha-D-muramoyl-L-alanyl-D-glutamyl-meso-2,6-diaminopimeloyl-D-alanyl-D-alanine + UMP. It participates in cell wall biogenesis; peptidoglycan biosynthesis. Catalyzes the initial step of the lipid cycle reactions in the biosynthesis of the cell wall peptidoglycan: transfers peptidoglycan precursor phospho-MurNAc-pentapeptide from UDP-MurNAc-pentapeptide onto the lipid carrier undecaprenyl phosphate, yielding undecaprenyl-pyrophosphoryl-MurNAc-pentapeptide, known as lipid I. The sequence is that of Phospho-N-acetylmuramoyl-pentapeptide-transferase from Frankia alni (strain DSM 45986 / CECT 9034 / ACN14a).